The chain runs to 356 residues: Protein RecA (356 aa).

75 to 82 (GPESSGKT) contacts ATP.

It belongs to the RecA family.

The protein resides in the cytoplasm. In terms of biological role, can catalyze the hydrolysis of ATP in the presence of single-stranded DNA, the ATP-dependent uptake of single-stranded DNA by duplex DNA, and the ATP-dependent hybridization of homologous single-stranded DNAs. It interacts with LexA causing its activation and leading to its autocatalytic cleavage. The chain is Protein RecA from Burkholderia mallei (strain ATCC 23344).